We begin with the raw amino-acid sequence, 555 residues long: MVKRGKKTKYLFVTGGVVSSLGKGLSAASIGALLENRGLEVQHLKLDPYINVDPGTMSPFQHGEVFVTDDGAETDLDLGHYERFTSAKMTRRNNYTTGRIYQNVIQRERRGEYLGKTVQVIPHITDEIKAVIREAAGGADILIVEVGGTVGDIESLPFLEAIRQMKYDVGEENAVYAHLTLVPFIAAAGELKTKPTQHSVKELREIGIQPDLLLCRSDRELPRDMKDKIALFCNVDPSAVFTALDVPSIYEVPLSLHREGLDDKLAELFNIWSRAPRLERWETIVDKVKNPRRGEVRIGIVGKYVELHESYKSLNEALVHGGIANDARVKLAFIDSTKLEEGDLSDLDKVDAILVPGGFGIRGTEGKILGVKYAREHKVPFFGICLGLQMAVIEMARNVLGLAGANSLEFDEATPHPVVTLMEGQKGVTDKGGTMRLGAYPCTLKEGTKARALYGAELVHERHRHRFEFNNDYRAQFEAAGMVFSGVNPDLGLVEMIELPGQHFVGCQFHPEFRSKPFAPHPLFAGFVKAALEHRDAQQRQPPAEVKKLAVGKNG.

The interval 1 to 271 (MVKRGKKTKY…DDKLAELFNI (271 aa)) is amidoligase domain. Residue Ser19 participates in CTP binding. Ser19 contributes to the UTP binding site. ATP is bound by residues 20–25 (SLGKGL) and Asp77. Positions 77 and 145 each coordinate Mg(2+). Residues 152–154 (DIE), 192–197 (KTKPTQ), and Lys228 contribute to the CTP site. UTP contacts are provided by residues 192-197 (KTKPTQ) and Lys228. A Glutamine amidotransferase type-1 domain is found at 297 to 537 (RIGIVGKYVE…VKAALEHRDA (241 aa)). Gly358 is a binding site for L-glutamine. Cys385 functions as the Nucleophile; for glutamine hydrolysis in the catalytic mechanism. L-glutamine contacts are provided by residues 386-389 (LGLQ), Glu409, and Arg466. Active-site residues include His510 and Glu512. The interval 535–555 (RDAQQRQPPAEVKKLAVGKNG) is disordered.

The protein belongs to the CTP synthase family. In terms of assembly, homotetramer.

The enzyme catalyses UTP + L-glutamine + ATP + H2O = CTP + L-glutamate + ADP + phosphate + 2 H(+). The catalysed reaction is L-glutamine + H2O = L-glutamate + NH4(+). It carries out the reaction UTP + NH4(+) + ATP = CTP + ADP + phosphate + 2 H(+). It functions in the pathway pyrimidine metabolism; CTP biosynthesis via de novo pathway; CTP from UDP: step 2/2. With respect to regulation, allosterically activated by GTP, when glutamine is the substrate; GTP has no effect on the reaction when ammonia is the substrate. The allosteric effector GTP functions by stabilizing the protein conformation that binds the tetrahedral intermediate(s) formed during glutamine hydrolysis. Inhibited by the product CTP, via allosteric rather than competitive inhibition. Catalyzes the ATP-dependent amination of UTP to CTP with either L-glutamine or ammonia as the source of nitrogen. Regulates intracellular CTP levels through interactions with the four ribonucleotide triphosphates. This chain is CTP synthase, found in Anaeromyxobacter sp. (strain K).